A 581-amino-acid polypeptide reads, in one-letter code: Putative protein phosphatase 2C 22 (581 aa).

Residues 1–21 form the signal peptide; the sequence is MVISVPLFSSVLLALVVAVPA. The 377-residue stretch at 102-478 folds into the PPM-type phosphatase domain; the sequence is KYASSAMQGL…NNATAILVQF (377 aa). Residues Asp138, Gly139, Asp373, and Asn469 each coordinate Mn(2+). The interval 538-563 is disordered; it reads SDEVAGGAAVAEQHQHNPEGGGEQQL.

This sequence belongs to the PP2C family. It depends on Mg(2+) as a cofactor. The cofactor is Mn(2+).

It carries out the reaction O-phospho-L-seryl-[protein] + H2O = L-seryl-[protein] + phosphate. It catalyses the reaction O-phospho-L-threonyl-[protein] + H2O = L-threonyl-[protein] + phosphate. The polypeptide is Putative protein phosphatase 2C 22 (Oryza sativa subsp. japonica (Rice)).